The sequence spans 179 residues: Bacterioferritin (179 aa).

One can recognise a Ferritin-like diiron domain in the interval M1–G150. Positions 23 and 56 each coordinate Fe cation. M57 serves as a coordination point for Fe-coproporphyrin III. The Fe cation site is built by H59, E99, E132, and H135.

It belongs to the bacterioferritin family. Homooligomer of 24 subunits, arranged as 12 dimers, that are packed together to form an approximately spherical molecule with a central cavity, in which large amounts of iron can be deposited. Requires Fe-coproporphyrin III as cofactor. It depends on Fe cation as a cofactor.

The enzyme catalyses 4 Fe(2+) + O2 + 4 H(+) = 4 Fe(3+) + 2 H2O. The catalysed reaction is Fe(2+)(in) = Fe(2+)(out). Its function is as follows. Iron-storage protein, whose ferroxidase center binds Fe(2+), oxidizes it using dioxygen to Fe(3+), and participates in the subsequent Fe(3+) oxide mineral core formation within the central cavity of the BFR protein shell. This is Bacterioferritin (bfr) from Desulfovibrio desulfuricans (strain ATCC 27774 / DSM 6949 / MB).